We begin with the raw amino-acid sequence, 61 residues long: Sperm protamine P1 (61 aa).

The segment at 1 to 61 is disordered; that stretch reads MARYRHSRSR…RRYSRRRRRY (61 aa).

Belongs to the protamine P1 family. As to expression, testis.

It localises to the nucleus. The protein resides in the chromosome. Functionally, protamines substitute for histones in the chromatin of sperm during the haploid phase of spermatogenesis. They compact sperm DNA into a highly condensed, stable and inactive complex. In Potorous longipes (Long-footed potoroo), this protein is Sperm protamine P1 (PRM1).